A 120-amino-acid polypeptide reads, in one-letter code: UPF0231 protein ETA_08290 (120 aa).

It belongs to the UPF0231 family.

This Erwinia tasmaniensis (strain DSM 17950 / CFBP 7177 / CIP 109463 / NCPPB 4357 / Et1/99) protein is UPF0231 protein ETA_08290.